Reading from the N-terminus, the 166-residue chain is Thioredoxin, mitochondrial (166 aa).

Residues 1–59 constitute a mitochondrion transit peptide; that stretch reads MAQRLLLRRFLTSVISRKPPQGVWASLTSTSLQTPPYNAGGLTGTPSPARTFHTTRVCS. A Thioredoxin domain is found at 61–166; that stretch reads TFNVQDGPDF…LEAFLKKLIG (106 aa). Catalysis depends on nucleophile residues Cys90 and Cys93. Cys90 and Cys93 are oxidised to a cystine. Lys152 carries the N6-acetyllysine; alternate modification. Residue Lys152 is modified to N6-succinyllysine; alternate.

Belongs to the thioredoxin family. In terms of assembly, monomer. Expressed in several tissues with the highest expression levels in heart, muscle, kidney and adrenal gland.

The protein resides in the mitochondrion. In terms of biological role, important for the control of mitochondrial reactive oxygen species homeostasis, apoptosis regulation and cell viability. Is involved in various redox reactions including the reduction of protein disulfide bonds, through the reversible oxidation of its active center dithiol to a disulfide. In Rattus norvegicus (Rat), this protein is Thioredoxin, mitochondrial (Txn2).